Here is a 459-residue protein sequence, read N- to C-terminus: Exodeoxyribonuclease 7 large subunit (459 aa).

The protein belongs to the XseA family. As to quaternary structure, heterooligomer composed of large and small subunits.

Its subcellular location is the cytoplasm. It catalyses the reaction Exonucleolytic cleavage in either 5'- to 3'- or 3'- to 5'-direction to yield nucleoside 5'-phosphates.. In terms of biological role, bidirectionally degrades single-stranded DNA into large acid-insoluble oligonucleotides, which are then degraded further into small acid-soluble oligonucleotides. The sequence is that of Exodeoxyribonuclease 7 large subunit from Pseudomonas entomophila (strain L48).